We begin with the raw amino-acid sequence, 248 residues long: Probable succinyl-CoA:3-ketoacid coenzyme A transferase subunit A (248 aa).

24–30 contacts CoA; the sequence is GGFGLCG.

The protein belongs to the 3-oxoacid CoA-transferase subunit A family. Heterodimer of a subunit A and a subunit B.

It carries out the reaction a 3-oxo acid + succinyl-CoA = a 3-oxoacyl-CoA + succinate. The chain is Probable succinyl-CoA:3-ketoacid coenzyme A transferase subunit A (scoA) from Mycobacterium bovis (strain ATCC BAA-935 / AF2122/97).